Here is a 143-residue protein sequence, read N- to C-terminus: Large ribosomal subunit protein uL16 (143 aa).

This sequence belongs to the universal ribosomal protein uL16 family. In terms of assembly, part of the 50S ribosomal subunit.

Functionally, binds 23S rRNA and is also seen to make contacts with the A and possibly P site tRNAs. The chain is Large ribosomal subunit protein uL16 from Caulobacter vibrioides (strain ATCC 19089 / CIP 103742 / CB 15) (Caulobacter crescentus).